Here is a 295-residue protein sequence, read N- to C-terminus: Nucleotide-binding protein llmg_1557 (295 aa).

12–19 lines the ATP pocket; that stretch reads GMSGAGKT. 63 to 66 is a binding site for GTP; the sequence is DMRS.

This sequence belongs to the RapZ-like family.

Its function is as follows. Displays ATPase and GTPase activities. This Lactococcus lactis subsp. cremoris (strain MG1363) protein is Nucleotide-binding protein llmg_1557.